The primary structure comprises 280 residues: Manganese import system permease protein ScaB (280 aa).

The next 8 helical transmembrane spans lie at 18 to 38 (ALITAIAIGIVAGAVGCFIIL), 61 to 81 (ILGINFFIGAIVFGLLASILI), 94 to 114 (TAIGITFSSFLALGVILIGVA), 139 to 159 (TIGVGVTVLLVICLLFRPLLL), 174 to 194 (VKIYHYLLMVLLTLVSVTAMQ), 196 to 216 (VGTILIVAMLITPAATAYLYA), 222 to 242 (MMLLSSSLGALASILGLFIGY), and 246 to 266 (IAVGSCIVLTSAVFFLISFFI).

Belongs to the ABC-3 integral membrane protein family.

It localises to the cell membrane. Part of an ABC transporter complex involved in manganese import. This chain is Manganese import system permease protein ScaB, found in Streptococcus parasanguinis.